We begin with the raw amino-acid sequence, 355 residues long: N-acetyl-gamma-glutamyl-phosphate reductase (355 aa).

Residue Cys-152 is part of the active site.

It belongs to the NAGSA dehydrogenase family. Type 1 subfamily.

It is found in the cytoplasm. The enzyme catalyses N-acetyl-L-glutamate 5-semialdehyde + phosphate + NADP(+) = N-acetyl-L-glutamyl 5-phosphate + NADPH + H(+). Its pathway is amino-acid biosynthesis; L-arginine biosynthesis; N(2)-acetyl-L-ornithine from L-glutamate: step 3/4. In terms of biological role, catalyzes the NADPH-dependent reduction of N-acetyl-5-glutamyl phosphate to yield N-acetyl-L-glutamate 5-semialdehyde. The protein is N-acetyl-gamma-glutamyl-phosphate reductase of Psychrobacter arcticus (strain DSM 17307 / VKM B-2377 / 273-4).